The sequence spans 174 residues: Ribosome maturation factor RimM (174 aa).

The PRC barrel domain maps to 101-174; the sequence is AGEFYLADLC…IELLQRWILE (74 aa).

It belongs to the RimM family. Binds ribosomal protein uS19.

The protein resides in the cytoplasm. Functionally, an accessory protein needed during the final step in the assembly of 30S ribosomal subunit, possibly for assembly of the head region. Essential for efficient processing of 16S rRNA. May be needed both before and after RbfA during the maturation of 16S rRNA. It has affinity for free ribosomal 30S subunits but not for 70S ribosomes. This chain is Ribosome maturation factor RimM, found in Treponema pallidum (strain Nichols).